Here is a 299-residue protein sequence, read N- to C-terminus: 4-hydroxy-3-methylbut-2-enyl diphosphate reductase (299 aa).

A [4Fe-4S] cluster-binding site is contributed by Cys12. (2E)-4-hydroxy-3-methylbut-2-enyl diphosphate contacts are provided by His42 and His88. Residues His42 and His88 each coordinate dimethylallyl diphosphate. Isopentenyl diphosphate-binding residues include His42 and His88. Cys110 contributes to the [4Fe-4S] cluster binding site. (2E)-4-hydroxy-3-methylbut-2-enyl diphosphate is bound at residue His138. A dimethylallyl diphosphate-binding site is contributed by His138. His138 is an isopentenyl diphosphate binding site. The active-site Proton donor is Glu140. A (2E)-4-hydroxy-3-methylbut-2-enyl diphosphate-binding site is contributed by Thr177. Cys205 contacts [4Fe-4S] cluster. Positions 233, 235, and 277 each coordinate (2E)-4-hydroxy-3-methylbut-2-enyl diphosphate. Dimethylallyl diphosphate contacts are provided by Ser233, Asn235, and Ser277. Residues Ser233, Asn235, and Ser277 each coordinate isopentenyl diphosphate.

This sequence belongs to the IspH family. Requires [4Fe-4S] cluster as cofactor.

The enzyme catalyses isopentenyl diphosphate + 2 oxidized [2Fe-2S]-[ferredoxin] + H2O = (2E)-4-hydroxy-3-methylbut-2-enyl diphosphate + 2 reduced [2Fe-2S]-[ferredoxin] + 2 H(+). It carries out the reaction dimethylallyl diphosphate + 2 oxidized [2Fe-2S]-[ferredoxin] + H2O = (2E)-4-hydroxy-3-methylbut-2-enyl diphosphate + 2 reduced [2Fe-2S]-[ferredoxin] + 2 H(+). Its pathway is isoprenoid biosynthesis; dimethylallyl diphosphate biosynthesis; dimethylallyl diphosphate from (2E)-4-hydroxy-3-methylbutenyl diphosphate: step 1/1. It participates in isoprenoid biosynthesis; isopentenyl diphosphate biosynthesis via DXP pathway; isopentenyl diphosphate from 1-deoxy-D-xylulose 5-phosphate: step 6/6. Its function is as follows. Catalyzes the conversion of 1-hydroxy-2-methyl-2-(E)-butenyl 4-diphosphate (HMBPP) into a mixture of isopentenyl diphosphate (IPP) and dimethylallyl diphosphate (DMAPP). Acts in the terminal step of the DOXP/MEP pathway for isoprenoid precursor biosynthesis. This chain is 4-hydroxy-3-methylbut-2-enyl diphosphate reductase, found in Malacoplasma penetrans (strain HF-2) (Mycoplasma penetrans).